The following is a 255-amino-acid chain: Indole-3-glycerol phosphate synthase (255 aa).

It belongs to the TrpC family.

It carries out the reaction 1-(2-carboxyphenylamino)-1-deoxy-D-ribulose 5-phosphate + H(+) = (1S,2R)-1-C-(indol-3-yl)glycerol 3-phosphate + CO2 + H2O. It functions in the pathway amino-acid biosynthesis; L-tryptophan biosynthesis; L-tryptophan from chorismate: step 4/5. The sequence is that of Indole-3-glycerol phosphate synthase from Streptococcus thermophilus (strain CNRZ 1066).